The sequence spans 58 residues: Birtoxin (58 aa).

The LCN-type CS-alpha/beta domain occupies V3–V58. Disulfide bonds link C18-C41, C27-C46, and C31-C48.

As to expression, expressed by the venom gland.

The protein resides in the secreted. Beta toxins bind voltage-independently at site-4 of sodium channels (Nav) and shift the voltage of activation toward more negative potentials thereby affecting sodium channel activation and promoting spontaneous and repetitive firing. Moderately toxic, but very high abundant. Does not target reptilian channels. Does not produce effect when administered to blowfly and cabbage looper larvae. In mice, produces convulsions, tremors, increased ventilation and, subsequently, death. The sequence is that of Birtoxin from Parabuthus transvaalicus (Transvaal thick-tailed scorpion).